The primary structure comprises 462 residues: HEPACAM family member 2 (462 aa).

The first 31 residues, 1 to 31 (MGQDAFMEPFGDTLGVFQCKIYLLLFGACSG), serve as a signal peptide directing secretion. Residues Asn-85, Asn-129, and Asn-165 are each glycosylated (N-linked (GlcNAc...) asparagine). 2 consecutive Ig-like C2-type domains span residues 149 to 233 (PVVQ…SDII) and 235 to 331 (PIIY…THFT). Disulfide bonds link Cys-170–Cys-219 and Cys-270–Cys-315. A glycan (N-linked (GlcNAc...) asparagine) is linked at Asn-320. The chain crosses the membrane as a helical span at residues 352-372 (LASITGISLFLIISMCLLFLW). Residues 373–462 (KKYQPYKVIK…IPAQQQDHPE (90 aa)) are Cytoplasmic-facing.

Poly-ADP-ribosylated (PARsylated) by tankyrase TNKS during late G2 and prophase, leading to translocation to mitotic centrosomes. Post-translationally, N-glycosylated. Widely expressed.

Its subcellular location is the golgi apparatus membrane. The protein localises to the cytoplasm. The protein resides in the cytoskeleton. It localises to the spindle. It is found in the microtubule organizing center. Its subcellular location is the centrosome. The protein localises to the midbody. Functionally, required during prometaphase for centrosome maturation. Following poly-ADP-ribosylation (PARsylation) by TNKS, translocates from the Golgi apparatus to mitotic centrosomes and plays a key role in the formation of robust microtubules for prompt movement of chromosomes: anchors AKAP9/CG-NAP, a scaffold protein of the gamma-tubulin ring complex and promotes centrosome maturation. The chain is HEPACAM family member 2 (HEPACAM2) from Homo sapiens (Human).